Here is an 834-residue protein sequence, read N- to C-terminus: Arf-GAP with coiled-coil, ANK repeat and PH domain-containing protein 3 (834 aa).

A PH domain is found at 268–363 (GVVMEGYLFK…WVQAVQASIA (96 aa)). The interval 375-400 (SERLDRTASPSTSSIDSATDTRERGV) is disordered. A compositionally biased stretch (polar residues) spans 382–392 (ASPSTSSIDSA). The 123-residue stretch at 403-525 (ESVLQRVQSV…KFLRKAPMAP (123 aa)) folds into the Arf-GAP domain. A C4-type zinc finger spans residues 418–441 (CGDCGQPDPRWASINLGVLLCIEC). The tract at residues 633 to 653 (SVTEEEGAESEESSGEADGDT) is disordered. Positions 634-653 (VTEEEGAESEESSGEADGDT) are enriched in acidic residues. 3 ANK repeats span residues 702–731 (EGKT…DVNQ), 735–764 (RGRA…DQHA), and 768–797 (EQRD…AEEM).

In terms of biological role, GTPase-activating protein for the ADP ribosylation factor family. The chain is Arf-GAP with coiled-coil, ANK repeat and PH domain-containing protein 3 (ACAP3) from Homo sapiens (Human).